The primary structure comprises 297 residues: uncharacterized protein (297 aa).

Glu46 is an active-site residue.

It belongs to the PhzF family. As to quaternary structure, homodimer and homotetramer.

This is an uncharacterized protein from Escherichia coli (strain K12).